We begin with the raw amino-acid sequence, 208 residues long: GTP cyclohydrolase 1 (208 aa).

Positions 89, 92, and 163 each coordinate Zn(2+).

This sequence belongs to the GTP cyclohydrolase I family. In terms of assembly, homomer.

It catalyses the reaction GTP + H2O = 7,8-dihydroneopterin 3'-triphosphate + formate + H(+). The protein operates within cofactor biosynthesis; 7,8-dihydroneopterin triphosphate biosynthesis; 7,8-dihydroneopterin triphosphate from GTP: step 1/1. In Saccharolobus islandicus (strain Y.N.15.51 / Yellowstone #2) (Sulfolobus islandicus), this protein is GTP cyclohydrolase 1.